The primary structure comprises 178 residues: Histone H3-like centromeric protein CENH3 (178 aa).

Residues 1–81 (MARTKHRVTR…GSQKKSYRYR (81 aa)) form a disordered region. Lys-5 is subject to N6,N6,N6-trimethyllysine; alternate. Lys-5 is modified (N6,N6-dimethyllysine; alternate). Lys-5 carries the post-translational modification N6-methyllysine; alternate. Ser-11 is subject to Phosphoserine. The span at 16–36 (QTDAAGASSSQAAGPTTTPTR) shows a compositional bias: low complexity. The segment covering 43–56 (DNTQQTNPTTSPAT) has biased composition (polar residues). N6-methyllysine; alternate occurs at positions 63 and 75. Residue Lys-63 is modified to N6-acetyllysine; alternate. Lys-75 is modified (N6,N6,N6-trimethyllysine; alternate). Lys-75 is subject to N6,N6-dimethyllysine; alternate.

Belongs to the histone H3 family. As to quaternary structure, forms a nucleosome-like histone octamer containing two molecules each of H2A, H2B, CENH3 and H4 assembled in one CENH3-H4 heterotetramer and two H2A-H2B heterodimers. Interacts with ORTH2.

The protein localises to the chromosome. It is found in the centromere. The protein resides in the kinetochore. In terms of biological role, histone H3-like variant which exclusively replaces conventional H3 in the nucleosome core of centromeric chromatin at the inner plate of the kinetochore. Required for recruitment and assembly of kinetochore proteins, mitotic progression and chromosome segregation. May serve as an epigenetic mark that propagates centromere identity through replication and cell division. This is Histone H3-like centromeric protein CENH3 from Arabidopsis thaliana (Mouse-ear cress).